Reading from the N-terminus, the 786-residue chain is Protein SEY1 (786 aa).

The Cytoplasmic segment spans residues 1–684 (MSDLKEAIQL…KRSIVNTTER (684 aa)). In terms of domain architecture, GB1/RHD3-type G spans 35 to 262 (GVKYHVISVF…QDASFFKDEY (228 aa)). Residue 45-52 (GSQSSGKS) participates in GTP binding. Positions 355 to 375 (KKVYEERRDDLIKQLNTIIDE) form a coiled coil. The helical transmembrane segment at 685–705 (IPLYMYALVVALGWGRIITIL) threads the bilayer. The Lumenal portion of the chain corresponds to 706–708 (RNP). A helical membrane pass occupies residues 709 to 729 (ATIILSIIVLAGAYFVHKLNL). Topologically, residues 730 to 786 (WGPLLQFANQATGQATAVLKQTVRSLVVDEEPKRKILVEPHESEGVDKEPSKNDQHL) are cytoplasmic. The tract at residues 765–786 (ILVEPHESEGVDKEPSKNDQHL) is disordered.

This sequence belongs to the TRAFAC class dynamin-like GTPase superfamily. GB1/RHD3 GTPase family. RHD3 subfamily.

The protein resides in the endoplasmic reticulum membrane. Cooperates with the reticulon proteins and tubule-shaping DP1 family proteins to generate and maintain the structure of the tubular endoplasmic reticulum network. Has GTPase activity, which is required for its function in ER organization. In Kluyveromyces lactis (strain ATCC 8585 / CBS 2359 / DSM 70799 / NBRC 1267 / NRRL Y-1140 / WM37) (Yeast), this protein is Protein SEY1.